The following is a 155-amino-acid chain: SsrA-binding protein (155 aa).

Residues 123-142 (DLHDKRETEKKRDWEREKGQ) show a composition bias toward basic and acidic residues. The disordered stretch occupies residues 123-155 (DLHDKRETEKKRDWEREKGQLMRHKISSPRKDT). Basic residues predominate over residues 143–155 (LMRHKISSPRKDT).

Belongs to the SmpB family.

The protein localises to the cytoplasm. Functionally, required for rescue of stalled ribosomes mediated by trans-translation. Binds to transfer-messenger RNA (tmRNA), required for stable association of tmRNA with ribosomes. tmRNA and SmpB together mimic tRNA shape, replacing the anticodon stem-loop with SmpB. tmRNA is encoded by the ssrA gene; the 2 termini fold to resemble tRNA(Ala) and it encodes a 'tag peptide', a short internal open reading frame. During trans-translation Ala-aminoacylated tmRNA acts like a tRNA, entering the A-site of stalled ribosomes, displacing the stalled mRNA. The ribosome then switches to translate the ORF on the tmRNA; the nascent peptide is terminated with the 'tag peptide' encoded by the tmRNA and targeted for degradation. The ribosome is freed to recommence translation, which seems to be the essential function of trans-translation. The chain is SsrA-binding protein from Methylibium petroleiphilum (strain ATCC BAA-1232 / LMG 22953 / PM1).